A 71-amino-acid polypeptide reads, in one-letter code: Omega-conotoxin-like CnVIIE (71 aa).

The first 22 residues, 1–22, serve as a signal peptide directing secretion; sequence MKLTCVVIVAVLLLTACQLITA. Positions 23–45 are excised as a propeptide; that stretch reads DDSRGTQKHRALRSDTKLSMSTR. Intrachain disulfides connect Cys46–Cys61, Cys53–Cys65, and Cys60–Cys70. Pro52 bears the 4-hydroxyproline; partial mark. Residue Cys70 is modified to Cysteine amide.

Belongs to the conotoxin M superfamily. Expressed by the venom duct.

The protein resides in the secreted. Omega-conotoxins act at presynaptic membranes, they bind and block voltage-gated calcium channels (Cav). The protein is Omega-conotoxin-like CnVIIE of Conus consors (Singed cone).